We begin with the raw amino-acid sequence, 168 residues long: uncharacterized protein (168 aa).

A helical transmembrane segment spans residues Ile5–Gly24.

It localises to the membrane. This is an uncharacterized protein from Bacillus subtilis (strain 168).